The chain runs to 370 residues: Pyruvate dehydrogenase E1 component subunit alpha (370 aa).

Heterodimer of an alpha and a beta chain. Thiamine diphosphate is required as a cofactor.

The catalysed reaction is N(6)-[(R)-lipoyl]-L-lysyl-[protein] + pyruvate + H(+) = N(6)-[(R)-S(8)-acetyldihydrolipoyl]-L-lysyl-[protein] + CO2. The pyruvate dehydrogenase complex catalyzes the overall conversion of pyruvate to acetyl-CoA and CO(2). It contains multiple copies of three enzymatic components: pyruvate dehydrogenase (E1), dihydrolipoamide acetyltransferase (E2) and lipoamide dehydrogenase (E3). The polypeptide is Pyruvate dehydrogenase E1 component subunit alpha (pdhA) (Staphylococcus aureus (strain MRSA252)).